The chain runs to 196 residues: Endonuclease V (196 aa).

Positions 37 and 98 each coordinate Mg(2+).

Belongs to the endonuclease V family. Requires Mg(2+) as cofactor.

It localises to the cytoplasm. It carries out the reaction Endonucleolytic cleavage at apurinic or apyrimidinic sites to products with a 5'-phosphate.. Its function is as follows. DNA repair enzyme involved in the repair of deaminated bases. Selectively cleaves double-stranded DNA at the second phosphodiester bond 3' to a deoxyinosine leaving behind the intact lesion on the nicked DNA. The chain is Endonuclease V from Sulfurisphaera tokodaii (strain DSM 16993 / JCM 10545 / NBRC 100140 / 7) (Sulfolobus tokodaii).